A 47-amino-acid polypeptide reads, in one-letter code: Large ribosomal subunit protein eL40 (47 aa).

It belongs to the eukaryotic ribosomal protein eL40 family.

This is Large ribosomal subunit protein eL40 from Halobacterium salinarum (strain ATCC 29341 / DSM 671 / R1).